The primary structure comprises 107 residues: MALPPLTPEQRAAALEKAAAARRERAEVKNRLKHSGASLHEVIKQGQENDVIGKMKVSALLESLPGVGKVRAKQIMERLGISESRRVRGLGSNQIASLEREFGSTGS.

The interval 1 to 20 is disordered; the sequence is MALPPLTPEQRAAALEKAAA. A compositionally biased stretch (low complexity) spans 9–18; it reads EQRAAALEKA. Position 54 (lysine 54) interacts with DNA. The H2TH motif, binds DNA signature appears at 64–71; the sequence is LPGVGKVR. DNA contacts are provided by serine 82, arginine 85, arginine 88, serine 92, asparagine 93, and glutamine 94. Residues 82–94 are lid, binds DNA; sequence SESRRVRGLGSNQ.

This sequence belongs to the actinobacterial IHF (aIHF) family. In terms of assembly, monomer.

It localises to the cytoplasm. The protein localises to the spore. It is found in the nucleoid. Its function is as follows. A nucleoid-associated protein (NAP) that probably plays a role in chromosome compactation. Contributes to development and secondary metabolism, but is dispensable for growth and viability. Binds to the promoter region of a number of genes (including itself); multiple molecules of the protein bind to the DNA simultaneously, deletion alters the expression of about 30 genes (both up- and down-regulation occurs). Plays a role in controlling viability. Binds dsDNA without any obvious sequence specificity, in a concentration and length-dependent manner. Promotes supercoiling in a topoisomerase-dependent manner (counteracts TopA plasmid relaxation). Binds DNA as a monomer, contacting 8 base pairs via the phosphate backbone; each monomer can bind 2 DNA duplexes, allowing a bridging function. Alters DNA topology, constraining negative supercoils, possibly by DNA twist. Longer dsDNA binds more than one sIHF subunit. The chain is Integration host factor from Streptomyces coelicolor (strain ATCC BAA-471 / A3(2) / M145).